Consider the following 475-residue polypeptide: Bifunctional aspartate aminotransferase and glutamate/aspartate-prephenate aminotransferase (475 aa).

The transit peptide at 1–55 (MASQSSVAVISSAAARGESFPDSKKPIGSVRFQQPLRLSFSYCKSGNMSSRICAM) directs the protein to the chloroplast. Residues G107, W193, and N243 each coordinate L-aspartate. At K306 the chain carries N6-(pyridoxal phosphate)lysine. R445 is an L-aspartate binding site.

The protein belongs to the class-I pyridoxal-phosphate-dependent aminotransferase family. As to quaternary structure, homodimer. Requires pyridoxal 5'-phosphate as cofactor.

The protein resides in the plastid. It is found in the chloroplast. The enzyme catalyses L-aspartate + 2-oxoglutarate = oxaloacetate + L-glutamate. It carries out the reaction L-arogenate + oxaloacetate = prephenate + L-aspartate. It catalyses the reaction L-arogenate + 2-oxoglutarate = prephenate + L-glutamate. It participates in amino-acid biosynthesis; L-phenylalanine biosynthesis; L-arogenate from prephenate (L-Asp route): step 1/1. Its pathway is amino-acid biosynthesis; L-phenylalanine biosynthesis; L-arogenate from prephenate (L-Glu route): step 1/1. Prokaryotic-type aspartate aminotransferase. Also has a prenate transaminase activity. Involved in the aromatic amino acids biosynthesis pathway via the arogenate route. Required for the transamination of prephenate into arogenate. Required for early development of the embryo. This chain is Bifunctional aspartate aminotransferase and glutamate/aspartate-prephenate aminotransferase (PAT), found in Arabidopsis thaliana (Mouse-ear cress).